Here is a 103-residue protein sequence, read N- to C-terminus: Small ribosomal subunit protein bS18 (103 aa).

Basic and acidic residues predominate over residues 1–19 (MSEERTERPERTERPERPQ). The tract at residues 1–33 (MSEERTERPERTERPERPQQRGSGPRKRRPFQR) is disordered. Basic residues predominate over residues 24–33 (GPRKRRPFQR).

This sequence belongs to the bacterial ribosomal protein bS18 family. In terms of assembly, part of the 30S ribosomal subunit. Forms a tight heterodimer with protein bS6.

In terms of biological role, binds as a heterodimer with protein bS6 to the central domain of the 16S rRNA, where it helps stabilize the platform of the 30S subunit. The protein is Small ribosomal subunit protein bS18 of Geobacter sulfurreducens (strain ATCC 51573 / DSM 12127 / PCA).